Consider the following 417-residue polypeptide: Imidazolonepropionase (417 aa).

Fe(3+) contacts are provided by His77 and His79. Positions 77 and 79 each coordinate Zn(2+). Residues Arg86, Tyr149, and His182 each contribute to the 4-imidazolone-5-propanoate site. Tyr149 provides a ligand contact to N-formimidoyl-L-glutamate. Residue His247 coordinates Fe(3+). Position 247 (His247) interacts with Zn(2+). Gln250 is a binding site for 4-imidazolone-5-propanoate. Asp322 is a binding site for Fe(3+). Asp322 provides a ligand contact to Zn(2+). The N-formimidoyl-L-glutamate site is built by Asn324 and Gly326. Thr327 lines the 4-imidazolone-5-propanoate pocket.

It belongs to the metallo-dependent hydrolases superfamily. HutI family. It depends on Zn(2+) as a cofactor. Fe(3+) is required as a cofactor.

The protein resides in the cytoplasm. It catalyses the reaction 4-imidazolone-5-propanoate + H2O = N-formimidoyl-L-glutamate. Its pathway is amino-acid degradation; L-histidine degradation into L-glutamate; N-formimidoyl-L-glutamate from L-histidine: step 3/3. Its function is as follows. Catalyzes the hydrolytic cleavage of the carbon-nitrogen bond in imidazolone-5-propanoate to yield N-formimidoyl-L-glutamate. It is the third step in the universal histidine degradation pathway. The polypeptide is Imidazolonepropionase (Cupriavidus taiwanensis (strain DSM 17343 / BCRC 17206 / CCUG 44338 / CIP 107171 / LMG 19424 / R1) (Ralstonia taiwanensis (strain LMG 19424))).